A 72-amino-acid chain; its full sequence is UPF0270 protein PM1156 (72 aa).

It belongs to the UPF0270 family.

This is UPF0270 protein PM1156 from Pasteurella multocida (strain Pm70).